Here is a 260-residue protein sequence, read N- to C-terminus: Shikimate dehydrogenase (NADP(+)) (260 aa).

Residues 14–16 and Thr60 contribute to the shikimate site; that span reads SAS. Lys64 functions as the Proton acceptor in the catalytic mechanism. Residues Asn85 and Asp100 each coordinate shikimate. NADP(+) is bound by residues 121–125, 145–150, and Phe201; these read GAGGA and NRTYER. Tyr203 contributes to the shikimate binding site. An NADP(+)-binding site is contributed by Gly225.

This sequence belongs to the shikimate dehydrogenase family. In terms of assembly, homodimer.

It catalyses the reaction shikimate + NADP(+) = 3-dehydroshikimate + NADPH + H(+). It participates in metabolic intermediate biosynthesis; chorismate biosynthesis; chorismate from D-erythrose 4-phosphate and phosphoenolpyruvate: step 4/7. Involved in the biosynthesis of the chorismate, which leads to the biosynthesis of aromatic amino acids. Catalyzes the reversible NADPH linked reduction of 3-dehydroshikimate (DHSA) to yield shikimate (SA). The sequence is that of Shikimate dehydrogenase (NADP(+)) from Pyrobaculum islandicum (strain DSM 4184 / JCM 9189 / GEO3).